The primary structure comprises 297 residues: Ribosomal RNA small subunit methyltransferase A (297 aa).

Residues asparagine 31, leucine 33, glycine 58, glutamate 79, aspartate 104, and asparagine 129 each coordinate S-adenosyl-L-methionine.

This sequence belongs to the class I-like SAM-binding methyltransferase superfamily. rRNA adenine N(6)-methyltransferase family. RsmA subfamily.

The protein localises to the cytoplasm. It catalyses the reaction adenosine(1518)/adenosine(1519) in 16S rRNA + 4 S-adenosyl-L-methionine = N(6)-dimethyladenosine(1518)/N(6)-dimethyladenosine(1519) in 16S rRNA + 4 S-adenosyl-L-homocysteine + 4 H(+). Specifically dimethylates two adjacent adenosines (A1518 and A1519) in the loop of a conserved hairpin near the 3'-end of 16S rRNA in the 30S particle. May play a critical role in biogenesis of 30S subunits. This Staphylococcus aureus (strain bovine RF122 / ET3-1) protein is Ribosomal RNA small subunit methyltransferase A.